Consider the following 301-residue polypeptide: Acetylglutamate kinase (301 aa).

Residues glycine 68 to glycine 69, arginine 90, and asparagine 195 each bind substrate.

This sequence belongs to the acetylglutamate kinase family. ArgB subfamily.

The protein localises to the cytoplasm. The catalysed reaction is N-acetyl-L-glutamate + ATP = N-acetyl-L-glutamyl 5-phosphate + ADP. It functions in the pathway amino-acid biosynthesis; L-arginine biosynthesis; N(2)-acetyl-L-ornithine from L-glutamate: step 2/4. Functionally, catalyzes the ATP-dependent phosphorylation of N-acetyl-L-glutamate. This Pseudomonas aeruginosa (strain LESB58) protein is Acetylglutamate kinase.